The following is a 207-amino-acid chain: Ras-related protein Rab-7a (207 aa).

Thr-2 bears the N-acetylthreonine mark. GTP is bound by residues Ser-17, Gly-18, Val-19, Gly-20, Lys-21, Thr-22, Ser-23, Ser-34, Asn-35, Tyr-37, and Thr-40. Residue Thr-22 participates in Mg(2+) binding. Residues 28 to 41 (YVNKKFSNQYKATI) carry the Switch 1 motif. Mg(2+) is bound by residues Thr-40 and Asp-63. Gly-66 contributes to the GTP binding site. The Switch 2 signature appears at 67–82 (QERFQSLGVAFYRGAD). Phosphoserine is present on Ser-72. GTP-binding residues include Asn-125, Lys-126, Asp-128, Ala-156, and Lys-157. Glycyl lysine isopeptide (Lys-Gly) (interchain with G-Cter in ubiquitin) cross-links involve residues Lys-191 and Lys-194. Residues Cys-205 and Cys-207 are each lipidated (S-geranylgeranyl cysteine). Cys-207 is modified (cysteine methyl ester).

Belongs to the small GTPase superfamily. Rab family. In terms of assembly, interacts with NTRK1/TRKA. Interacts with RILP. Interacts with PSMA7. Interacts with RNF115. Interacts with FYCO1. Interacts with the PIK3C3/VPS34-PIK3R4 complex. The GTP-bound form interacts with OSBPL1A. The GTP-bound form interacts with RAC1. Interacts with CLN3. Interacts with CHM, the substrate-binding subunit of the Rab geranylgeranyltransferase complex. Interacts with C9orf72. Does not interact with HPS4 and the BLOC-3 complex (heterodimer of HPS1 and HPS4). Interacts with CLN5. Interacts with PLEKHM1 (via N- and C-terminus). Interacts with PRPH; the interaction is direct. Interacts with VPS13A. The GDP-bound form interacts with RIMOC1. Interacts with the MON1A-CCZ1B complex and this interaction is enhanced in the presence of RIMOC1. Interacts with VPS39 and VPS41. Forms a ternary complex with LAMP2 and RUFY4; the interaction with LAMP2 is mediated by RUFY4 (via RUN and coiled coil domains). Mg(2+) serves as cofactor. Post-translationally, deubiquitination at Lys-191 and Lys-194 by USP32. In terms of processing, phosphorylated at Ser-72 by LRRK1; phosphorylation is dependent on protein kinase C (PKC) activation of LRRK1. Prenylated. Prenylation is required for association with cellular membranes.

It localises to the cytoplasmic vesicle. The protein localises to the phagosome membrane. Its subcellular location is the late endosome membrane. It is found in the lysosome membrane. The protein resides in the melanosome membrane. It localises to the autophagosome membrane. The protein localises to the lipid droplet. Its subcellular location is the endosome membrane. It is found in the mitochondrion membrane. It carries out the reaction GTP + H2O = GDP + phosphate + H(+). Regulated by guanine nucleotide exchange factors (GEFs) which promote the exchange of bound GDP for free GTP. Regulated by GTPase activating proteins (GAPs) which increase the GTP hydrolysis activity. Inhibited by GDP dissociation inhibitors (GDIs). Its function is as follows. The small GTPases Rab are key regulators of intracellular membrane trafficking, from the formation of transport vesicles to their fusion with membranes. Rabs cycle between an inactive GDP-bound form and an active GTP-bound form that is able to recruit to membranes different sets of downstream effectors directly responsible for vesicle formation, movement, tethering and fusion. In its active state, RAB7A binds to a variety of effector proteins playing a key role in the regulation of endo-lysosomal trafficking. Governs early-to-late endosomal maturation, microtubule minus-end as well as plus-end directed endosomal migration and positioning, and endosome-lysosome transport through different protein-protein interaction cascades. Also plays a central role in growth-factor-mediated cell signaling, nutrient-transporter-mediated nutrient uptake, neurotrophin transport in the axons of neurons and lipid metabolism. Also involved in regulation of some specialized endosomal membrane trafficking, such as maturation of melanosomes, pathogen-induced phagosomes (or vacuoles) and autophagosomes. Plays a role in the maturation and acidification of phagosomes that engulf pathogens, such as S.aureus and Mycobacteria. Plays a role in the fusion of phagosomes with lysosomes. In concert with RAC1, plays a role in regulating the formation of RBs (ruffled borders) in osteoclasts. Controls the endosomal trafficking and neurite outgrowth signaling of NTRK1/TRKA. Regulates the endocytic trafficking of the EGF-EGFR complex by regulating its lysosomal degradation. Involved in the ADRB2-stimulated lipolysis through lipophagy, a cytosolic lipase-independent autophagic pathway. Required for the exosomal release of SDCBP, CD63 and syndecan. Required for vesicular trafficking and cell surface expression of ACE2. May play a role in PRPH neuronal intermediate filament assembly. This is Ras-related protein Rab-7a (RAB7A) from Bos taurus (Bovine).